The chain runs to 242 residues: Large ribosomal subunit protein uL2 (242 aa).

The segment at 201–242 is disordered; that stretch reads VDHPFGGGRHQHTGKPTTVSRKKVPPGRKVGHISARRTGVRK. Over residues 220-242 the composition is skewed to basic residues; the sequence is SRKKVPPGRKVGHISARRTGVRK.

Belongs to the universal ribosomal protein uL2 family. In terms of assembly, part of the 50S ribosomal subunit. Forms a bridge to the 30S subunit in the 70S ribosome.

One of the primary rRNA binding proteins. Required for association of the 30S and 50S subunits to form the 70S ribosome, for tRNA binding and peptide bond formation. It has been suggested to have peptidyltransferase activity; this is somewhat controversial. Makes several contacts with the 16S rRNA in the 70S ribosome. The polypeptide is Large ribosomal subunit protein uL2 (Methanocaldococcus jannaschii (strain ATCC 43067 / DSM 2661 / JAL-1 / JCM 10045 / NBRC 100440) (Methanococcus jannaschii)).